The following is a 498-amino-acid chain: Capsanthin/capsorubin synthase, chromoplastic (498 aa).

A chromoplast-targeting transit peptide spans 1 to 52 (METLLKPFPSPLLSIPTPNMYSFKHNSTFPNPTKQKDSRKFHYRNKSSTHFC). 84-112 (VIIIGTGPAGLRLAEQVSKYGIKVCCVDP) is an NAD(+) binding site. Positions 293–297 (FLEET) match the FLEET motif motif.

This sequence belongs to the lycopene cyclase family. In terms of assembly, monomer. Requires FAD as cofactor. It depends on NADPH as a cofactor.

It localises to the plastid. Its subcellular location is the chromoplast. It carries out the reaction all-trans-violaxanthin = all-trans-capsorubin. It catalyses the reaction all-trans-antheraxanthin = all-trans-capsanthin. The enzyme catalyses all-trans-violaxanthin = (5R,6S)-5,6-epoxi-capsanthin. The catalysed reaction is (5R,6S)-5,6-epoxi-capsanthin = all-trans-capsorubin. The protein operates within carotenoid biosynthesis; capsanthin biosynthesis; capsanthin from antheraxanthin: step 1/1. Its pathway is carotenoid biosynthesis; capsorubin biosynthesis; capsorubin from violaxanthin: step 1/1. Catalyzes the conversion of the ubiquitous 5,6-epoxycarotenoids, antheraxanthin and violaxanthin, into capsanthin and capsorubin, respectively. The polypeptide is Capsanthin/capsorubin synthase, chromoplastic (Capsicum annuum (Capsicum pepper)).